The sequence spans 403 residues: Tubby-like F-box protein 6 (403 aa).

The 56-residue stretch at 50 to 105 (SCWAQLPPELLREVLVRIEESEVWWPSRRDVVACAGVCRSWRGITKEIVRVPEASG) folds into the F-box domain.

It belongs to the TUB family. As to expression, ubiquitous.

This chain is Tubby-like F-box protein 6 (TULP6), found in Oryza sativa subsp. japonica (Rice).